We begin with the raw amino-acid sequence, 184 residues long: ATP synthase subunit b, chloroplastic (184 aa).

A helical membrane pass occupies residues L27 to L49.

Belongs to the ATPase B chain family. As to quaternary structure, F-type ATPases have 2 components, F(1) - the catalytic core - and F(0) - the membrane proton channel. F(1) has five subunits: alpha(3), beta(3), gamma(1), delta(1), epsilon(1). F(0) has four main subunits: a(1), b(1), b'(1) and c(10-14). The alpha and beta chains form an alternating ring which encloses part of the gamma chain. F(1) is attached to F(0) by a central stalk formed by the gamma and epsilon chains, while a peripheral stalk is formed by the delta, b and b' chains.

The protein localises to the plastid. The protein resides in the chloroplast thylakoid membrane. Functionally, f(1)F(0) ATP synthase produces ATP from ADP in the presence of a proton or sodium gradient. F-type ATPases consist of two structural domains, F(1) containing the extramembraneous catalytic core and F(0) containing the membrane proton channel, linked together by a central stalk and a peripheral stalk. During catalysis, ATP synthesis in the catalytic domain of F(1) is coupled via a rotary mechanism of the central stalk subunits to proton translocation. In terms of biological role, component of the F(0) channel, it forms part of the peripheral stalk, linking F(1) to F(0). The polypeptide is ATP synthase subunit b, chloroplastic (Oenothera elata subsp. hookeri (Hooker's evening primrose)).